We begin with the raw amino-acid sequence, 162 residues long: Peptidyl-prolyl cis-trans isomerase (162 aa).

One can recognise a PPIase cyclophilin-type domain in the interval 5 to 161 (FFDVQFGGDA…TTIKIVDSGV (157 aa)).

It belongs to the cyclophilin-type PPIase family. PPIase A subfamily.

The catalysed reaction is [protein]-peptidylproline (omega=180) = [protein]-peptidylproline (omega=0). Binds cyclosporin A (CsA). CsA mediates some of its effects via an inhibitory action on PPIase. In terms of biological role, PPIases accelerate the folding of proteins. It catalyzes the cis-trans isomerization of proline imidic peptide bonds in oligopeptides. This is Peptidyl-prolyl cis-trans isomerase from Paramecium primaurelia.